A 298-amino-acid polypeptide reads, in one-letter code: uncharacterized protein (298 aa).

Catalysis depends on charge relay system residues Thr-43 and Tyr-105. The active-site Proton donor is Tyr-131. Catalysis depends on Lys-159, which acts as the Schiff-base intermediate with substrate.

The protein belongs to the DapA family. In terms of assembly, homotetramer.

It localises to the cytoplasm. This is an uncharacterized protein from Pyrococcus furiosus (strain ATCC 43587 / DSM 3638 / JCM 8422 / Vc1).